The sequence spans 2528 residues: Reducing polyketide synthase PKS1 (2528 aa).

The Ketosynthase family 3 (KS3) domain maps to 11–436 (ITPIAVVGMS…GANVHAILES (426 aa)). Active-site for beta-ketoacyl synthase activity residues include cysteine 186, histidine 321, and histidine 359. The tract at residues 573–868 (FVFTGQGAQW…LGGPISQVID (296 aa)) is malonyl-CoA:ACP transacylase (MAT). The interval 954 to 1092 (LDLIGVFDVH…GLISVLKSSK (139 aa)) is N-terminal hotdog fold. One can recognise a PKS/mFAS DH domain in the interval 954–1278 (LDLIGVFDVH…LVALDRPNSS (325 aa)). The interval 956 to 1277 (LIGVFDVHSS…TLVALDRPNS (322 aa)) is dehydratase (DH) domain. Histidine 986 functions as the Proton acceptor; for dehydratase activity in the catalytic mechanism. Positions 1122–1278 (KTEWDVKDMY…LVALDRPNSS (157 aa)) are C-terminal hotdog fold. Aspartate 1187 serves as the catalytic Proton donor; for dehydratase activity. The tract at residues 1827–2139 (GLLDSLHFTV…TGRHMGKMVA (313 aa)) is enoyl reductase (ER) domain. The interval 2164-2341 (ASYLLVGGVG…ATVIDIGAVH (178 aa)) is ketoreductase (KR) domain. Residues 2442 to 2519 (SAVTIVLSAL…ALAVKIAARS (78 aa)) enclose the Carrier domain. Serine 2479 carries the O-(pantetheine 4'-phosphoryl)serine modification.

It participates in mycotoxin biosynthesis. Functionally, reducing polyketide synthase (PKS); part of the Tox1A locus, one of the 2 loci that mediate the biosynthesis of T-toxin, a family of linear polyketides 37 to 45 carbons in length, of which the major component is 41 carbons, and which leads to high virulence to maize. One of the PKSs (PKS1 or PKS2) could synthesize a precursor, used subsequently by the other PKS as starter unit, to add additional carbons. Variability in the length of the final carbon backbone C35-47 could be achieved by varying the number of condensation cycles, or use of different starter or extender units or might be due to decarboxylation of the penultimate product, catalyzed by DEC1. Additional proteins are required for the biosynthesis of T-toxin, including oxidoreductases RED1, RED2, RED3, LAM1 and OXI1, as well as esterase TOX9. The polypeptide is Reducing polyketide synthase PKS1 (Cochliobolus heterostrophus (strain C4 / ATCC 48331 / race T) (Southern corn leaf blight fungus)).